The chain runs to 388 residues: T-cell surface glycoprotein CD1e, membrane-associated (388 aa).

Residues 1–19 form the signal peptide; the sequence is MLLLFLLFEGLCCPGENTA. A propeptide spans 20–31 (removed in sCD1e); sequence APQALQSYHLAA. N-linked (GlcNAc...) asparagine glycans are attached at residues Asn-47 and Asn-84. Positions 191–301 constitute an Ig-like domain; the sequence is PRFLAGLMEA…LGGHDLIIHW (111 aa). An intrachain disulfide couples Cys-230 to Cys-285. A helical transmembrane segment spans residues 305-325; that stretch reads SIFLILICLTVIVTLVILVVV.

As to quaternary structure, heterodimer with B2M (beta-2-microglobulin). The association with B2M appears to be facilitated by the presence of the propeptide. Post-translationally, mono-ubiquitinated. In terms of processing, proteolytically cleaved in late endosomes to yield a soluble form. As to expression, expressed on cortical thymocytes, dendritic cells, Langerhans cells, on certain T-cell leukemias, and in various other tissues.

It is found in the golgi apparatus membrane. It localises to the early endosome. Its subcellular location is the late endosome. The protein resides in the lysosome lumen. In terms of biological role, T-cell surface glycoprotein CD1e, soluble binds diacetylated lipids, including phosphatidyl inositides and diacylated sulfoglycolipids, and is required for the presentation of glycolipid antigens on the cell surface. The membrane-associated form is not active. This chain is T-cell surface glycoprotein CD1e, membrane-associated (CD1E), found in Homo sapiens (Human).